The following is a 369-amino-acid chain: Superinfection exclusion protein (369 aa).

The first 15 residues, 1–15 (MIALLILSLTCSVST), serve as a signal peptide directing secretion.

The protein belongs to the serpin family. Orthopoxvirus OPG040 subfamily. In terms of assembly, interacts with OPG185/A56 protein.

The protein resides in the virion membrane. The protein localises to the host cell membrane. Its function is as follows. Negatively regulates superinfection and syncytium formation in infected host cells. Acts in concert with OPG185/A56 protein at the host cell membrane by interacting with and inhibiting the mature virion entry/fusion complex (EFC). This mechanism ensures that new virions released from the cell cannot enter already infected cells. The protein is Superinfection exclusion protein (OPG040) of Vaccinia virus (strain Western Reserve) (VACV).